Consider the following 122-residue polypeptide: MVQQQTILNVADNSGAKKLMVIRVLGGSRKRFGKIGDIVVASVKEAIPGGNVKKGDIVKAVIVRTRKETRRDDGSYIKFDDNAGVVINNNNEPRATRIFGPVARELRARNFMKILSLAIEVI.

The protein belongs to the universal ribosomal protein uL14 family. In terms of assembly, part of the 50S ribosomal subunit. Forms a cluster with proteins L3 and L19. In the 70S ribosome, L14 and L19 interact and together make contacts with the 16S rRNA in bridges B5 and B8.

Binds to 23S rRNA. Forms part of two intersubunit bridges in the 70S ribosome. The chain is Large ribosomal subunit protein uL14 from Fusobacterium nucleatum subsp. nucleatum (strain ATCC 25586 / DSM 15643 / BCRC 10681 / CIP 101130 / JCM 8532 / KCTC 2640 / LMG 13131 / VPI 4355).